The following is a 350-amino-acid chain: Phosphotriesterase-related protein (350 aa).

A divalent metal cation-binding residues include His24, His26, Glu170, His202, His231, and Asp299.

This sequence belongs to the metallo-dependent hydrolases superfamily. Phosphotriesterase family. It depends on a divalent metal cation as a cofactor.

The polypeptide is Phosphotriesterase-related protein (Nematostella vectensis (Starlet sea anemone)).